The following is a 390-amino-acid chain: O-phospho-L-seryl-tRNA:Cys-tRNA synthase 2 (390 aa).

Pyridoxal 5'-phosphate is bound by residues 83 to 84 (AR), N187, and 210 to 212 (SGH). Residue K213 is modified to N6-(pyridoxal phosphate)lysine.

This sequence belongs to the SepCysS family. In terms of assembly, homodimer. Interacts with SepRS. Pyridoxal 5'-phosphate is required as a cofactor.

The catalysed reaction is O-phospho-L-seryl-tRNA(Cys) + hydrogen sulfide + H(+) = L-cysteinyl-tRNA(Cys) + phosphate. Functionally, converts O-phospho-L-seryl-tRNA(Cys) (Sep-tRNA(Cys)) to L-cysteinyl-tRNA(Cys) (Cys-tRNA(Cys)). The polypeptide is O-phospho-L-seryl-tRNA:Cys-tRNA synthase 2 (Archaeoglobus fulgidus (strain ATCC 49558 / DSM 4304 / JCM 9628 / NBRC 100126 / VC-16)).